A 373-amino-acid chain; its full sequence is Probable G-protein coupled receptor 45 (373 aa).

Topologically, residues 1–38 are extracellular; it reads MACNSTPMGTYEHLLLNVSNTLDPGDTPLSAPLRISLA. Asparagine 17 carries an N-linked (GlcNAc...) asparagine glycan. A helical transmembrane segment spans residues 39-59; sequence IMMLLMIVVGFLGNTVVCIIV. Residues 60 to 75 are Cytoplasmic-facing; that stretch reads YQRPAMRSAINLLLAT. The helical transmembrane segment at 76 to 96 threads the bilayer; the sequence is LAFSDIMLSLCCMPFTAITLI. The Extracellular portion of the chain corresponds to 97 to 109; it reads TVRWHFGDHFCRL. The helical transmembrane segment at 110–130 threads the bilayer; sequence SATLYWFFVLEGVAILLIISV. Residues 131–149 lie on the Cytoplasmic side of the membrane; sequence DRFLIIVQRQDKLNPRRAK. Residues 150–170 form a helical membrane-spanning segment; the sequence is MIIAASWVLSFCISAPSFTGW. The Extracellular portion of the chain corresponds to 171-198; the sequence is TFMEVPARAPQCVLGYTEFPAERAYVVT. The chain crosses the membrane as a helical span at residues 199–219; it reads LVVAVFFAPFGVMLCSYLCIL. Residues 220–269 are Cytoplasmic-facing; the sequence is NTVRKNAVRVHNQSDSLDLRQLTGAGLRRLRRQQQQASLDLSFKTKAFTT. The helical transmembrane segment at 270–290 threads the bilayer; that stretch reads ILILFVGFSLCWLPHSVYSLL. Residues 291–306 are Extracellular-facing; it reads SAFSRRFYYSASFYTT. A helical transmembrane segment spans residues 307–327; the sequence is STCVLWLSYLKSVFNPIVYCW. Over 328-373 the chain is Cytoplasmic; that stretch reads RIKKFREACIELLPHTFQILPKVPERIQRKIQPSTIYVCNENQSAV.

This sequence belongs to the G-protein coupled receptor 1 family. As to expression, brain specific.

It is found in the cell membrane. Orphan receptor. May play a role in brain function. In Mus musculus (Mouse), this protein is Probable G-protein coupled receptor 45 (Gpr45).